The following is a 598-amino-acid chain: Insulin-like growth factor 2 mRNA-binding protein 1 (598 aa).

2 consecutive RRM domains span residues 2–75 (NKLY…HSVP) and 81–156 (RKLQ…YIPD). A disordered region spans residues 155-195 (PDENSEVDSQRGPDNGRRPGYGPRGTSRQMSPGSGIPSKHQ). A compositionally biased stretch (basic and acidic residues) spans 162-171 (DSQRGPDNGR). A Phosphoserine modification is found at S185. KH domains are found at residues 198-263 (DIPL…CRMI) and 279-346 (EVPL…EQEI). Y399 bears the Phosphotyrosine mark. 2 KH domains span residues 407-472 (QETV…QGRI) and 489-555 (KLET…QRKI). Positions 561–598 (QVKQQQKGGGMGTPQGPHPQGMTELGSPQGLAQEPRRK) are disordered. Residues T573 and T583 each carry the phosphothreonine modification. The segment covering 574–583 (PQGPHPQGMT) has biased composition (low complexity). S587 is modified (phosphoserine).

It belongs to the RRM IMP/VICKZ family. Component of the CRD-mediated complex.

Its subcellular location is the nucleus. The protein resides in the cytoplasm. It localises to the perinuclear region. It is found in the P-body. The protein localises to the stress granule. Its subcellular location is the cell projection. The protein resides in the growth cone. It localises to the filopodium. It is found in the lamellipodium. Functionally, RNA-binding factor that recruits target transcripts to cytoplasmic protein-RNA complexes (mRNPs). This transcript 'caging' into mRNPs allows mRNA transport and transient storage. It also modulates the rate and location at which target transcripts encounter the translational apparatus and shields them from endonuclease attacks or microRNA-mediated degradation. Preferentially binds to N6-methyladenosine (m6A)-containing mRNAs and increases their stability. Plays a direct role in the transport and translation of transcripts required for axonal regeneration in adult sensory neurons. Regulates localized beta-actin/ACTB mRNA translation in polarized cells, a crucial process for cell migration and neurite outgrowth. Promotes the directed movement of cells by fine-tuning intracellular signaling networks and enhances the velocity of cell migration. This Danio rerio (Zebrafish) protein is Insulin-like growth factor 2 mRNA-binding protein 1 (igf2bp1).